The chain runs to 575 residues: Developmental and secondary metabolism regulator VEL1 (575 aa).

The Velvet domain occupies 21–225; it reads GRKLKYTLTV…AEQGCRVRIR (205 aa). The Nuclear localization signal signature appears at 35–40; sequence ERARAC. Disordered stretches follow at residues 36 to 56 and 227 to 402; these read RARACGSGAKSSADRRPVDPP and DVRM…QSYE. Residues 274–284 show a composition bias toward basic and acidic residues; it reads VHEDPQQRRGS. Residues 294-308 show a composition bias toward polar residues; sequence VVNTPFRTPSISPST. The span at 334–346 shows a compositional bias: pro residues; it reads IQPPHPPPPPPSS. Composition is skewed to polar residues over residues 355-365 and 385-402; these read HHNQGPSTQFR and SYSQFRPPTNPSQQQSYE. Residues 465–509 are PEST; the sequence is AEQPLAMSPLASVTSISRGTQNSAPMPSHNYNKLERSGSYSQYAP. The interval 513 to 549 is disordered; sequence EAPKSTNKRSFNDVFSTPTESLSNGRRPSAIGIDIEE. Residues 516-538 are compositionally biased toward polar residues; it reads KSTNKRSFNDVFSTPTESLSNGR.

It belongs to the velvet family. VeA subfamily. As to quaternary structure, component of the heterotrimeric velvet complex composed of LAE1, VEL1 and VEL2; VEL1 acting as a bridging protein between LAE1 and VEL2.

It localises to the nucleus. The protein localises to the cytoplasm. Functionally, component of the velvet transcription factor complex that controls sexual/asexual developmental ratio in response to light, promoting sexual development in the darkness while stimulating asexual sporulation under illumination. The velvet complex hat acts as a global regulator for secondary metabolite gene expression. Controls the expression of the oxalic acid and melanin gene clusters. Also controls the expression of proteases and carbohydrate-active enzymes. Involved in the resistance to oxidative stress. Required for full virulence. This is Developmental and secondary metabolism regulator VEL1 from Botryotinia fuckeliana (strain B05.10) (Noble rot fungus).